Here is a 145-residue protein sequence, read N- to C-terminus: Superoxide dismutase [Mn/Fe] (145 aa).

The Fe(3+) site is built by His10 and His64. 2 residues coordinate Mn(2+): His10 and His64. The segment at 126 to 145 is disordered; the sequence is TSTANQDTPISEGKKPILGL.

It belongs to the iron/manganese superoxide dismutase family. The cofactor is Mn(2+). Fe(3+) serves as cofactor.

The catalysed reaction is 2 superoxide + 2 H(+) = H2O2 + O2. Destroys superoxide anion radicals which are normally produced within the cells and which are toxic to biological systems. Catalyzes the dismutation of superoxide anion radicals into O2 and H2O2 by successive reduction and oxidation of the transition metal ion at the active site. The sequence is that of Superoxide dismutase [Mn/Fe] (sodA) from Streptococcus mitis.